Here is a 692-residue protein sequence, read N- to C-terminus: Formate hydrogenlyase transcriptional activator (692 aa).

In terms of domain architecture, GAF spans 202–344 (DIDELVSEVA…QIAERVAIAV (143 aa)). The 230-residue stretch at 381-610 (IIGRSEAMYN…LENVVERAVL (230 aa)) folds into the Sigma-54 factor interaction domain. Residues 409-416 (GETGTGKE) and 472-481 (ADKSSLFLDE) each bind ATP. Residues 663–682 (PKGAAQRLGLKRTTLLSRMK) constitute a DNA-binding region (H-T-H motif).

Functionally, required for induction of expression of the formate dehydrogenase H and hydrogenase-3 structural genes. The chain is Formate hydrogenlyase transcriptional activator (fhlA) from Salmonella typhimurium (strain SL1344).